We begin with the raw amino-acid sequence, 187 residues long: MASCLPNASPFLVMLAMCLLISTSEAEKYVVGGSEKSWKFPLSKPDSLSHWANSHRFKIGDTLIFKYEKRTESVHEGNETDYEGCNTVGKYHIVFNGGNTKVMLTKPGFRHFISGNQSHCQMGLKLAVLVISSNKTKKNLLSPSPSPSPPPSSLLSPSPSPLPNNQGVTSSSGAGFIGVMMWLMLLL.

Residues 1–26 (MASCLPNASPFLVMLAMCLLISTSEA) form the signal peptide. Residues 27 to 132 (EKYVVGGSEK…GLKLAVLVIS (106 aa)) form the Phytocyanin domain. 3 N-linked (GlcNAc...) asparagine glycosylation sites follow: Asn78, Asn116, and Asn134. A disulfide bridge links Cys85 with Cys120. The interval 138-167 (KNLLSPSPSPSPPPSSLLSPSPSPLPNNQG) is disordered. Over residues 144-162 (SPSPSPPPSSLLSPSPSPL) the composition is skewed to pro residues.

Belongs to the early nodulin-like (ENODL) family.

It is found in the symbiosome. Its subcellular location is the peribacteroid membrane. Functionally, may act as a carbohydrate transporter. In Glycine max (Soybean), this protein is Early nodulin-55-2.